Here is a 189-residue protein sequence, read N- to C-terminus: Ras-like protein 1 (189 aa).

10 to 17 (GAGGVGKS) serves as a coordination point for GTP. Residues 32–40 (YDPTIEDSY) carry the Effector region motif. Residues 57 to 61 (DTAGQ) and 116 to 119 (NKCD) contribute to the GTP site. A Cysteine methyl ester modification is found at Cys186. Cys186 carries the S-geranylgeranyl cysteine lipid modification. A propeptide spans 187–189 (KML) (removed in mature form).

The protein belongs to the small GTPase superfamily. Ras family.

The protein resides in the cell membrane. It carries out the reaction GTP + H2O = GDP + phosphate + H(+). With respect to regulation, alternates between an inactive form bound to GDP and an active form bound to GTP. Activated by a guanine nucleotide-exchange factor (GEF) and inactivated by a GTPase-activating protein (GAP). Ras proteins bind GDP/GTP and possess intrinsic GTPase activity. Plays a role in eye development by regulating cell growth, survival of postmitotic ommatidial cells and differentiation of photoreceptor cells. During larval development, mediates Ptth/tor signaling leading to the production of ecdysone, a hormone required for the initiation of metamorphosis. The protein is Ras-like protein 1 of Drosophila virilis (Fruit fly).